Reading from the N-terminus, the 173-residue chain is Alpha-crystallin A chain (173 aa).

The residue at position 1 (Met-1) is an N-acetylmethionine. Residues 1 to 63 (MDVTIQHPWF…RTVLDSGISE (63 aa)) form a required for complex formation with BFSP1 and BFSP2 region. Gln-6 carries the deamidated glutamine; partial modification. Ser-45 is subject to Phosphoserine. Gln-50 carries the post-translational modification Deamidated glutamine; partial. The sHSP domain occupies 52-162 (LFRTVLDSGI…GHSERAIPVS (111 aa)). Lys-99 is modified (N6-acetyllysine). His-100 lines the Zn(2+) pocket. Asn-101 is modified (deamidated asparagine; partial). Zn(2+) contacts are provided by Glu-102 and His-107. Phosphoserine is present on Ser-122. Asn-123 carries the post-translational modification Deamidated asparagine; partial. The cysteines at positions 131 and 142 are disulfide-linked. Positions 146–173 (VQSSMDDGHSERAIPVSREEKPSSVPSS) are disordered. Gln-147 carries the deamidated glutamine; partial modification. Residues 151–167 (DDGHSERAIPVSREEKP) show a composition bias toward basic and acidic residues. Position 154 (His-154) interacts with Zn(2+). O-linked (GlcNAc) serine glycosylation is present at Ser-162.

The protein belongs to the small heat shock protein (HSP20) family. In terms of assembly, heteromer composed of three CRYAA and one CRYAB subunits. Inter-subunit bridging via zinc ions enhances stability, which is crucial as there is no protein turn over in the lens. Can also form homodimers and homotetramers (dimers of dimers) which serve as the building blocks of homooligomers. Within homooligomers, the zinc-binding motif is created from residues of 3 different molecules. His-100 and Glu-102 from one molecule are ligands of the zinc ion, and His-107 and His-154 residues from additional molecules complete the site with tetrahedral coordination geometry. Part of a complex required for lens intermediate filament formation composed of BFSP1, BFSP2 and CRYAA. In terms of processing, undergoes age-dependent proteolytical cleavage at the C-terminus.

Its subcellular location is the cytoplasm. It localises to the nucleus. Its function is as follows. Contributes to the transparency and refractive index of the lens. In its oxidized form (absence of intramolecular disulfide bond), acts as a chaperone, preventing aggregation of various proteins under a wide range of stress conditions. Required for the correct formation of lens intermediate filaments as part of a complex composed of BFSP1, BFSP2 and CRYAA. This is Alpha-crystallin A chain (CRYAA) from Orycteropus afer (Aardvark).